We begin with the raw amino-acid sequence, 396 residues long: NADH-quinone oxidoreductase subunit D 1 (396 aa).

Belongs to the complex I 49 kDa subunit family. As to quaternary structure, NDH-1 is composed of 14 different subunits. Subunits NuoB, C, D, E, F, and G constitute the peripheral sector of the complex.

It is found in the cell inner membrane. It catalyses the reaction a quinone + NADH + 5 H(+)(in) = a quinol + NAD(+) + 4 H(+)(out). In terms of biological role, NDH-1 shuttles electrons from NADH, via FMN and iron-sulfur (Fe-S) centers, to quinones in the respiratory chain. The immediate electron acceptor for the enzyme in this species is believed to be ubiquinone. Couples the redox reaction to proton translocation (for every two electrons transferred, four hydrogen ions are translocated across the cytoplasmic membrane), and thus conserves the redox energy in a proton gradient. This Sinorhizobium medicae (strain WSM419) (Ensifer medicae) protein is NADH-quinone oxidoreductase subunit D 1.